The chain runs to 193 residues: ATP-dependent protease subunit HslV (193 aa).

Threonine 12 is a catalytic residue. Na(+) contacts are provided by alanine 167, cysteine 170, and threonine 173.

Belongs to the peptidase T1B family. HslV subfamily. In terms of assembly, a double ring-shaped homohexamer of HslV is capped on each side by a ring-shaped HslU homohexamer. The assembly of the HslU/HslV complex is dependent on binding of ATP.

The protein resides in the cytoplasm. It catalyses the reaction ATP-dependent cleavage of peptide bonds with broad specificity.. With respect to regulation, allosterically activated by HslU binding. Protease subunit of a proteasome-like degradation complex believed to be a general protein degrading machinery. The chain is ATP-dependent protease subunit HslV from Bartonella henselae (strain ATCC 49882 / DSM 28221 / CCUG 30454 / Houston 1) (Rochalimaea henselae).